The sequence spans 117 residues: Large ribosomal subunit protein bL20 (117 aa).

It belongs to the bacterial ribosomal protein bL20 family.

Its function is as follows. Binds directly to 23S ribosomal RNA and is necessary for the in vitro assembly process of the 50S ribosomal subunit. It is not involved in the protein synthesizing functions of that subunit. In Leptospira interrogans serogroup Icterohaemorrhagiae serovar copenhageni (strain Fiocruz L1-130), this protein is Large ribosomal subunit protein bL20.